Here is a 96-residue protein sequence, read N- to C-terminus: UPF0235 protein YPN_3141 (96 aa).

This sequence belongs to the UPF0235 family.

In Yersinia pestis bv. Antiqua (strain Nepal516), this protein is UPF0235 protein YPN_3141.